Here is a 301-residue protein sequence, read N- to C-terminus: Ribonuclease HIII (301 aa).

The RNase H type-2 domain maps to 84–301 (ASAIGSDEVG…TEKAARIAKK (218 aa)). A divalent metal cation-binding residues include Asp90, Glu91, and Asp195.

This sequence belongs to the RNase HII family. RnhC subfamily. It depends on Mn(2+) as a cofactor. The cofactor is Mg(2+).

It localises to the cytoplasm. It carries out the reaction Endonucleolytic cleavage to 5'-phosphomonoester.. Its function is as follows. Endonuclease that specifically degrades the RNA of RNA-DNA hybrids. The polypeptide is Ribonuclease HIII (Geobacillus sp. (strain WCH70)).